Reading from the N-terminus, the 459-residue chain is Phosphomethylpyrimidine synthase (459 aa).

Substrate-binding positions include N80, M109, Y139, H175, 195–197 (SRG), 236–239 (DSLR), and E275. Residue H279 coordinates Zn(2+). Residue Y302 coordinates substrate. H343 is a binding site for Zn(2+). [4Fe-4S] cluster is bound by residues C423, C426, and C431.

Belongs to the ThiC family. The cofactor is [4Fe-4S] cluster.

It carries out the reaction 5-amino-1-(5-phospho-beta-D-ribosyl)imidazole + S-adenosyl-L-methionine = 4-amino-2-methyl-5-(phosphooxymethyl)pyrimidine + CO + 5'-deoxyadenosine + formate + L-methionine + 3 H(+). It functions in the pathway cofactor biosynthesis; thiamine diphosphate biosynthesis. Its function is as follows. Catalyzes the synthesis of the hydroxymethylpyrimidine phosphate (HMP-P) moiety of thiamine from aminoimidazole ribotide (AIR) in a radical S-adenosyl-L-methionine (SAM)-dependent reaction. The sequence is that of Phosphomethylpyrimidine synthase from Prochlorococcus marinus (strain MIT 9211).